The chain runs to 306 residues: Homeobox protein CUP9 (306 aa).

Positions 75-123 (PAINSGGTSTTATPTASTVETSKTSSSAMDTQSQYGSSKKSKSASDDAK) are disordered. Positions 79-96 (SGGTSTTATPTASTVETS) are enriched in low complexity. Residues 97–110 (KTSSSAMDTQSQYG) are compositionally biased toward polar residues. The homeobox; TALE-type DNA-binding region spans 162–224 (NSGRRSNLPK…NVRRRKIFSD (63 aa)).

This sequence belongs to the TALE/CUP9 homeobox family.

The protein resides in the nucleus. In terms of biological role, probable DNA-binding protein which plays a role in protecting yeast cells against copper toxicity. May regulate the expression of important copper homeostatic genes. In Saccharomyces cerevisiae (strain ATCC 204508 / S288c) (Baker's yeast), this protein is Homeobox protein CUP9 (CUP9).